Reading from the N-terminus, the 338-residue chain is Tetraacyldisaccharide 4'-kinase (338 aa).

67 to 74 contacts ATP; sequence IAGGAGKT.

The protein belongs to the LpxK family.

The enzyme catalyses a lipid A disaccharide + ATP = a lipid IVA + ADP + H(+). Its pathway is glycolipid biosynthesis; lipid IV(A) biosynthesis; lipid IV(A) from (3R)-3-hydroxytetradecanoyl-[acyl-carrier-protein] and UDP-N-acetyl-alpha-D-glucosamine: step 6/6. Functionally, transfers the gamma-phosphate of ATP to the 4'-position of a tetraacyldisaccharide 1-phosphate intermediate (termed DS-1-P) to form tetraacyldisaccharide 1,4'-bis-phosphate (lipid IVA). This Acidovorax ebreus (strain TPSY) (Diaphorobacter sp. (strain TPSY)) protein is Tetraacyldisaccharide 4'-kinase.